A 423-amino-acid polypeptide reads, in one-letter code: Mannose-6-phosphate isomerase (423 aa).

Ala-2 is subject to N-acetylalanine. Phosphoserine is present on residues Ser-102 and Ser-108. Zn(2+) contacts are provided by Gln-110, His-112, Glu-137, and His-276. Residue Arg-295 is part of the active site.

Belongs to the mannose-6-phosphate isomerase type 1 family. The cofactor is Zn(2+).

The protein localises to the cytoplasm. It catalyses the reaction D-mannose 6-phosphate = D-fructose 6-phosphate. Its pathway is nucleotide-sugar biosynthesis; GDP-alpha-D-mannose biosynthesis; alpha-D-mannose 1-phosphate from D-fructose 6-phosphate: step 1/2. Functionally, isomerase that catalyzes the interconversion of fructose-6-P and mannose-6-P and has a critical role in the supply of D-mannose derivatives required for many eukaryotic glycosylation reactions. The protein is Mannose-6-phosphate isomerase of Rattus norvegicus (Rat).